Consider the following 180-residue polypeptide: UPF0149 protein XOO1028 (180 aa).

This sequence belongs to the UPF0149 family.

The protein is UPF0149 protein XOO1028 of Xanthomonas oryzae pv. oryzae (strain MAFF 311018).